The following is a 211-amino-acid chain: Peptide methionine sulfoxide reductase MsrA (211 aa).

The active site involves cysteine 52.

The protein belongs to the MsrA Met sulfoxide reductase family.

The catalysed reaction is L-methionyl-[protein] + [thioredoxin]-disulfide + H2O = L-methionyl-(S)-S-oxide-[protein] + [thioredoxin]-dithiol. It carries out the reaction [thioredoxin]-disulfide + L-methionine + H2O = L-methionine (S)-S-oxide + [thioredoxin]-dithiol. Functionally, has an important function as a repair enzyme for proteins that have been inactivated by oxidation. Catalyzes the reversible oxidation-reduction of methionine sulfoxide in proteins to methionine. The chain is Peptide methionine sulfoxide reductase MsrA from Photobacterium profundum (strain SS9).